The sequence spans 758 residues: 5-methyltetrahydropteroyltriglutamate--homocysteine methyltransferase (758 aa).

Residues 15 to 18 (RELK) and lysine 114 each bind 5-methyltetrahydropteroyltri-L-glutamate. Residues 433 to 435 (IGS) and glutamate 486 each bind L-homocysteine. L-methionine-binding positions include 433–435 (IGS) and glutamate 486. 5-methyltetrahydropteroyltri-L-glutamate-binding positions include 517-518 (RC) and tryptophan 563. Position 601 (aspartate 601) interacts with L-homocysteine. Aspartate 601 lines the L-methionine pocket. Glutamate 607 contacts 5-methyltetrahydropteroyltri-L-glutamate. Positions 643, 645, and 667 each coordinate Zn(2+). The Proton donor role is filled by histidine 696. Cysteine 728 serves as a coordination point for Zn(2+).

Belongs to the vitamin-B12 independent methionine synthase family. Zn(2+) serves as cofactor.

The enzyme catalyses 5-methyltetrahydropteroyltri-L-glutamate + L-homocysteine = tetrahydropteroyltri-L-glutamate + L-methionine. Its pathway is amino-acid biosynthesis; L-methionine biosynthesis via de novo pathway; L-methionine from L-homocysteine (MetE route): step 1/1. Catalyzes the transfer of a methyl group from 5-methyltetrahydrofolate to homocysteine resulting in methionine formation. The sequence is that of 5-methyltetrahydropteroyltriglutamate--homocysteine methyltransferase from Syntrophotalea carbinolica (strain DSM 2380 / NBRC 103641 / GraBd1) (Pelobacter carbinolicus).